Consider the following 259-residue polypeptide: Glutamate 5-kinase (259 aa).

An ATP-binding site is contributed by Lys-18. Residues Ser-54, Asp-141, and Asn-153 each contribute to the substrate site. 173-174 (SD) provides a ligand contact to ATP.

This sequence belongs to the glutamate 5-kinase family.

It is found in the cytoplasm. It carries out the reaction L-glutamate + ATP = L-glutamyl 5-phosphate + ADP. Its pathway is amino-acid biosynthesis; L-proline biosynthesis; L-glutamate 5-semialdehyde from L-glutamate: step 1/2. Its function is as follows. Catalyzes the transfer of a phosphate group to glutamate to form L-glutamate 5-phosphate. In Clavibacter michiganensis subsp. michiganensis (strain NCPPB 382), this protein is Glutamate 5-kinase.